A 195-amino-acid polypeptide reads, in one-letter code: Myelin-associated neurite-outgrowth inhibitor (195 aa).

At 1 to 18 (MNPVYSPGSSGVPYANAK) the chain is on the cytoplasmic side. The helical transmembrane segment at 19–43 (GIGYPAGFPMGYAAAAPAYSPNMYA) threads the bilayer. Over 44-143 (GPNPAFQPGY…APIPQPRGNG (100 aa)) the chain is Extracellular. The helical transmembrane segment at 144-162 (VAMGMVAGTTMAMSAGTLL) threads the bilayer. Residues 163-195 (TSHYPTPVAPHQVTMPTYRPPGTPTYSYVPPQW) lie on the Cytoplasmic side of the membrane.

Belongs to the FAM168 family.

The protein localises to the cytoplasm. It is found in the perinuclear region. It localises to the cell membrane. The protein resides in the cell projection. Its subcellular location is the axon. Inhibitor of neuronal axonal outgrowth. This chain is Myelin-associated neurite-outgrowth inhibitor (fam168b), found in Xenopus tropicalis (Western clawed frog).